A 346-amino-acid polypeptide reads, in one-letter code: Uroporphyrinogen decarboxylase (346 aa).

Substrate-binding positions include 23-27 (RQAGR), aspartate 73, tyrosine 151, serine 206, and histidine 321.

It belongs to the uroporphyrinogen decarboxylase family. In terms of assembly, homodimer.

The protein localises to the cytoplasm. It carries out the reaction uroporphyrinogen III + 4 H(+) = coproporphyrinogen III + 4 CO2. It participates in porphyrin-containing compound metabolism; protoporphyrin-IX biosynthesis; coproporphyrinogen-III from 5-aminolevulinate: step 4/4. Its function is as follows. Catalyzes the decarboxylation of four acetate groups of uroporphyrinogen-III to yield coproporphyrinogen-III. The polypeptide is Uroporphyrinogen decarboxylase (Sulfurovum sp. (strain NBC37-1)).